The sequence spans 342 residues: Cyclin pch1 (342 aa).

The interval 261-342 (LPIDQKNGSH…TDKEMETEAS (82 aa)) is disordered. A compositionally biased stretch (polar residues) spans 278-314 (TPSSLASVSTQATPQHQNSSGRTDSFHSLNTETPSKS). Threonine 300 carries the phosphothreonine modification. Serine 302 carries the phosphoserine modification. A compositionally biased stretch (basic and acidic residues) spans 329–342 (KSSDTDKEMETEAS).

The protein belongs to the cyclin family. Cyclin C subfamily. Interacts with cdc2 protein kinase and with the N-terminal domain of cdk9.

The protein localises to the nucleus. In terms of biological role, essential for progression through the whole cell cycle. This is Cyclin pch1 (pch1) from Schizosaccharomyces pombe (strain 972 / ATCC 24843) (Fission yeast).